The following is an 81-amino-acid chain: ATP synthase subunit c, chloroplastic (81 aa).

Helical transmembrane passes span 3–23 (PLISAASVIAAGLAVGLASIG) and 57–77 (LAFMEALTIYGLVVALALLFA).

It belongs to the ATPase C chain family. F-type ATPases have 2 components, F(1) - the catalytic core - and F(0) - the membrane proton channel. F(1) has five subunits: alpha(3), beta(3), gamma(1), delta(1), epsilon(1). F(0) has four main subunits: a(1), b(1), b'(1) and c(10-14). The alpha and beta chains form an alternating ring which encloses part of the gamma chain. F(1) is attached to F(0) by a central stalk formed by the gamma and epsilon chains, while a peripheral stalk is formed by the delta, b and b' chains.

The protein resides in the plastid. It localises to the chloroplast thylakoid membrane. Functionally, f(1)F(0) ATP synthase produces ATP from ADP in the presence of a proton or sodium gradient. F-type ATPases consist of two structural domains, F(1) containing the extramembraneous catalytic core and F(0) containing the membrane proton channel, linked together by a central stalk and a peripheral stalk. During catalysis, ATP synthesis in the catalytic domain of F(1) is coupled via a rotary mechanism of the central stalk subunits to proton translocation. Its function is as follows. Key component of the F(0) channel; it plays a direct role in translocation across the membrane. A homomeric c-ring of between 10-14 subunits forms the central stalk rotor element with the F(1) delta and epsilon subunits. The protein is ATP synthase subunit c, chloroplastic of Acorus calamus var. americanus (American sweet flag).